The primary structure comprises 94 residues: Large ribosomal subunit protein bL25 (94 aa).

Belongs to the bacterial ribosomal protein bL25 family. In terms of assembly, part of the 50S ribosomal subunit; part of the 5S rRNA/L5/L18/L25 subcomplex. Contacts the 5S rRNA. Binds to the 5S rRNA independently of L5 and L18.

Functionally, this is one of the proteins that binds to the 5S RNA in the ribosome where it forms part of the central protuberance. The chain is Large ribosomal subunit protein bL25 from Enterobacter sp. (strain 638).